A 501-amino-acid chain; its full sequence is L-lysine transport protein (501 aa).

Helical transmembrane passes span 25–41 (LIALIIGSTVGAGIFSI), 52–76 (GAMLIGWLIAGVGMLSVAFVFHVLA), 92–113 (VGLGDYVGFSSAWGYWLGSVIA), 138–155 (FVSALAVSALTWLVFGVV), 174–191 (ILPLLCFIILVAFLGFSW), 214–232 (GIMVYTVWVFIGIEGASVY), 247–269 (VIGFVAVLLLLVSISSLSFGVLT), 292–316 (WGAALISLGLCLSVLGAYVSWQMLC), 340–362 (GAAWMAQLISTIVIQIFIIIFFL), 377–393 (LYLVPYLFSAFYLVMLA), 424–440 (LIVGLVATVYSVWLFYA), 447–463 (LFGAMAMLPGLIPYVWT), and 477–495 (IGVVVVLVVAASAGVIGLV).

Belongs to the amino acid-polyamine-organocation (APC) superfamily. Basic amino acid/polyamine antiporter (APA) (TC 2.A.3.2) family.

The protein resides in the cell membrane. Permease that is involved in the transport across the membrane of lysine. The chain is L-lysine transport protein (lysI) from Corynebacterium glutamicum (strain ATCC 13032 / DSM 20300 / JCM 1318 / BCRC 11384 / CCUG 27702 / LMG 3730 / NBRC 12168 / NCIMB 10025 / NRRL B-2784 / 534).